A 396-amino-acid chain; its full sequence is Acetate kinase (396 aa).

Asparagine 7 contributes to the Mg(2+) binding site. An ATP-binding site is contributed by lysine 14. Residue arginine 88 participates in substrate binding. Aspartate 145 acts as the Proton donor/acceptor in catalysis. ATP contacts are provided by residues 205–209, 279–281, and 327–331; these read HLGNG, DFR, and GIGEN. Glutamate 381 provides a ligand contact to Mg(2+).

Belongs to the acetokinase family. As to quaternary structure, homodimer. Mg(2+) serves as cofactor. Mn(2+) is required as a cofactor.

It localises to the cytoplasm. The enzyme catalyses acetate + ATP = acetyl phosphate + ADP. It participates in metabolic intermediate biosynthesis; acetyl-CoA biosynthesis; acetyl-CoA from acetate: step 1/2. In terms of biological role, catalyzes the formation of acetyl phosphate from acetate and ATP. Can also catalyze the reverse reaction. This is Acetate kinase from Campylobacter jejuni (strain RM1221).